The sequence spans 210 residues: HTH-type transcriptional regulator TtgR (210 aa).

An HTH tetR-type domain is found at 10 to 70 (QETRAQIIEA…ALLDSLHETH (61 aa)). Positions 33–52 (TLADIAELAGVTRGAIYWHF) form a DNA-binding region, H-T-H motif.

Homodimer.

Represses expression from the ttgABC operon promoter and its own expression. Binds to a promoter region between the divergently transcribed ttgR and ttgABC genes/operons; in the presence of chloramphenicol or tetracycline this binding no longer occurs and ttgR and ttgABC are derepressed. This suggests that TtgR binds these antibiotics. This Pseudomonas putida (strain DOT-T1E) protein is HTH-type transcriptional regulator TtgR (ttgR).